Here is a 40-residue protein sequence, read N- to C-terminus: Photosystem II reaction center protein Y (40 aa).

A helical membrane pass occupies residues 5 to 23 (LVLVASPILLALGWAGFNI).

The protein belongs to the PsbY family. In terms of assembly, PSII is composed of 1 copy each of membrane proteins PsbA, PsbB, PsbC, PsbD, PsbE, PsbF, PsbH, PsbI, PsbJ, PsbK, PsbL, PsbM, PsbT, PsbX, PsbY, PsbZ, Psb30/Ycf12, peripheral proteins PsbO, CyanoQ (PsbQ), PsbU, PsbV and a large number of cofactors. It forms dimeric complexes.

The protein localises to the cellular thylakoid membrane. In terms of biological role, loosely associated component of the core of photosystem II (PSII), it is not always seen in crystals. PSII is a light-driven water plastoquinone oxidoreductase, using light energy to abstract electrons from H(2)O, generating a proton gradient subsequently used for ATP formation. This Synechococcus sp. (strain WH7803) protein is Photosystem II reaction center protein Y.